A 138-amino-acid chain; its full sequence is Dual specificity phosphatase ibp1 (138 aa).

The region spanning 19–133 (SPNEISIIDV…WKRRYGGQQG (115 aa)) is the Rhodanese domain. Cys70 serves as the catalytic Phosphocysteine intermediate.

The protein belongs to the MPI phosphatase family.

The protein resides in the cytoplasm. The protein localises to the nucleus. It carries out the reaction O-phospho-L-tyrosyl-[protein] + H2O = L-tyrosyl-[protein] + phosphate. Its function is as follows. May play a role in DNA replication checkpoint via regulation of hsk1 or may act downstream of hsk1 in an S phase regulatory pathway. The protein is Dual specificity phosphatase ibp1 (ibp1) of Schizosaccharomyces pombe (strain 972 / ATCC 24843) (Fission yeast).